The chain runs to 206 residues: High-affinity nitrate transporter-activating protein 2.1 (206 aa).

Positions 1–27 (MARLAGVAALSLVLVLLGAGVPRPAAA) are cleaved as a signal peptide. Residues 180–200 (VAAGVFSTFSIAALAFFFVVE) form a helical membrane-spanning segment.

It belongs to the NAR2 family. Heterotetramer composed of two NRT2.1, NRT2.2 or NRT2.3 and two NAR2.1. Interacts with NRT2.1, NRT2.2 and isoform 1 of NRT2.3. As to expression, expressed in epidermal cells of primary and lateral roots, root-shoot junction zone, vascular tissues of adventitious root primordia, stems and coleoptiles of germinating seeds.

The protein resides in the cell membrane. Functionally, acts as a dual component transporter with NTR2.1, NRT2.2 and NRT2.3. Required for high-affinity nitrate transport. Involved in the regulation of NRT2.1, NRT2.2 and NRT2.3 expression, and in both, HATS (high-affinity transport system) and LATS (low-affinity transport system) activities in plant roots. Imports nitrate with high affinity when expressed with NTR2.1, NTR2.2 or NTR2.3 in a heterologous system (Xenopus oocytes). In Oryza sativa subsp. japonica (Rice), this protein is High-affinity nitrate transporter-activating protein 2.1 (NAR2.1).